A 510-amino-acid polypeptide reads, in one-letter code: Scarecrow-like protein 29 (510 aa).

The tract at residues L90–G142 is disordered. Positions Q102–F111 are enriched in basic and acidic residues. The segment covering K119–I128 has biased composition (basic residues). Basic and acidic residues predominate over residues K129 to G142. A GRAS domain is found at K136–K510. The segment at R143–S205 is leucine repeat I (LRI). Residues L224–V294 are VHIID. The VHIID signature appears at L259–D263. The segment at N312–Q337 is leucine repeat II (LRII). Residues L347–K435 form a PFYRE region. The tract at residues M438 to K510 is SAW.

Belongs to the GRAS family. Expressed in seedlings, roots and flowers.

The protein resides in the nucleus. Probable transcription factor involved in plant development. This Arabidopsis thaliana (Mouse-ear cress) protein is Scarecrow-like protein 29 (SCL29).